The sequence spans 341 residues: MKKISNNIFFIMLISGTLITISSNSWLGAWMGLEINLLSFIPLMNEGKKNLMTSESSLKYFLTQAFASSILLFAIILMMMFFNENWMMNNNFNNLLILSTLLLKSGAAPFHFWFPGVMEGLNWINGLILMTWQKIAPLMLISYNLNINFFYFTILLSMIIGALGGLNQTSLRKLMAFSSINHIGWMLMAMMNNELLWLTYFLLYSILSMSIILMFNNFKLFHFNQIFNFSMMNPYIKFFMFLNLLSLGGLPPFLGFLPKWLVIQNLVEMNQLFLLFIAVCLTLITLYYYLRMSYSIYMLNYNKNSWMLMNSYSNNNLTLILTMNFISIMGLLIITLIYLIL.

8 helical membrane passes run 8 to 28 (IFFI…SWLG), 61 to 81 (FLTQ…MMMF), 95 to 117 (LLIL…FPGV), 145 to 165 (LNIN…ALGG), 195 to 215 (LLWL…ILMF), 238 to 258 (FFMF…GFLP), 266 to 286 (LVEM…LITL), and 320 to 340 (ILTM…IYLI).

It belongs to the complex I subunit 2 family.

Its subcellular location is the mitochondrion inner membrane. It catalyses the reaction a ubiquinone + NADH + 5 H(+)(in) = a ubiquinol + NAD(+) + 4 H(+)(out). Core subunit of the mitochondrial membrane respiratory chain NADH dehydrogenase (Complex I) that is believed to belong to the minimal assembly required for catalysis. Complex I functions in the transfer of electrons from NADH to the respiratory chain. The immediate electron acceptor for the enzyme is believed to be ubiquinone. The protein is NADH-ubiquinone oxidoreductase chain 2 of Aedes aegypti (Yellowfever mosquito).